Reading from the N-terminus, the 519-residue chain is Histidine--tRNA ligase, cytoplasmic (519 aa).

L-histidine-binding positions include 135 to 137 (DLT), Arg-162, Gln-178, Asp-182, Arg-331, and 335 to 336 (YY).

It belongs to the class-II aminoacyl-tRNA synthetase family. As to quaternary structure, homodimer.

The protein localises to the cytoplasm. The catalysed reaction is tRNA(His) + L-histidine + ATP = L-histidyl-tRNA(His) + AMP + diphosphate + H(+). In terms of biological role, catalyzes the ATP-dependent ligation of histidine to the 3'-end of its cognate tRNA, via the formation of an aminoacyl-adenylate intermediate (His-AMP). Plays a role in axon guidance. This chain is Histidine--tRNA ligase, cytoplasmic (hars1), found in Takifugu rubripes (Japanese pufferfish).